The chain runs to 144 residues: uncharacterized protein (144 aa).

Residues 25–47 (LTLLDGCCVALVLALTAWSGFFV) traverse the membrane as a helical segment.

It localises to the membrane. This is an uncharacterized protein from Treponema pallidum (strain Nichols).